The sequence spans 127 residues: MFNKSALIGSLLRRSFGTTNPLRQAIKNHQPNEMEKRFLVWSGKYKSQAEVPAFVSQDEMERVRNKMRIRLANIMIALTVIGCGIMVYSGKQAAKRGESVSKMNLEWHKQFNELKPEGGAAAPASTK.

Residues 69–88 form a helical membrane-spanning segment; that stretch reads IRLANIMIALTVIGCGIMVY.

It belongs to the UPF0389 family.

The protein localises to the membrane. The sequence is that of UPF0389 protein GA21628 from Drosophila pseudoobscura pseudoobscura (Fruit fly).